The following is a 228-amino-acid chain: Homeobox-leucine zipper protein ATHB-53 (228 aa).

A disordered region spans residues 36–62; sequence DGGEESKPVKRRRKRRSKGSSATNEED. Positions 44–53 are enriched in basic residues; the sequence is VKRRRKRRSK. Residues 68–127 constitute a DNA-binding region (homeobox); that stretch reads GMLRKRKLTDEQVNMLEYSFGNEHKLESGRKEKIAGELGLDPRQVAVWFQNRRARWKNKK. The leucine-zipper stretch occupies residues 128-156; that stretch reads LEEEYAKLKNHHDNVVLGQCQLESQILKL.

Belongs to the HD-ZIP homeobox family. Class I subfamily. As to expression, expressed in root meristem, late flowers and siliques.

It localises to the nucleus. Its function is as follows. Probable transcription factor that may play a regulatory role in auxin/cytokinin signaling during root development. This chain is Homeobox-leucine zipper protein ATHB-53 (ATHB-53), found in Arabidopsis thaliana (Mouse-ear cress).